The following is a 205-amino-acid chain: Outer-membrane lipoprotein LolB (205 aa).

Positions 1-17 are cleaved as a signal peptide; it reads MFLRHCITFTLIALLAG. Cys-18 carries N-palmitoyl cysteine lipidation. Cys-18 carries S-diacylglycerol cysteine lipidation.

The protein belongs to the LolB family. As to quaternary structure, monomer.

Its subcellular location is the cell outer membrane. Its function is as follows. Plays a critical role in the incorporation of lipoproteins in the outer membrane after they are released by the LolA protein. This chain is Outer-membrane lipoprotein LolB, found in Pseudomonas putida (strain W619).